The primary structure comprises 418 residues: Protein fuzzy homolog (418 aa).

This sequence belongs to the fuzzy family. As to quaternary structure, interacts with rsg1. Interacts with intu and wdpcp; fuz, intu and wdpcp probably form the core CPLANE (ciliogenesis and planar polarity effectors) complex.

The protein resides in the cytoplasm. It localises to the cytoskeleton. The protein localises to the cilium basal body. In terms of biological role, probable planar cell polarity effector involved in cilium biogenesis. Proposed to function as core component of the CPLANE (ciliogenesis and planar polarity effectors) complex involved in the recruitment of peripheral IFT-A proteins to basal bodies. May regulate protein and membrane transport to the cilium. May control the organization of the apical actin cytoskeleton, which is essential for the normal orientation of elongating ciliary microtubules. The protein is Protein fuzzy homolog (fuz) of Xenopus tropicalis (Western clawed frog).